The primary structure comprises 274 residues: Cytochrome b-c1 complex subunit Rieske, mitochondrial (274 aa).

Over 79 to 103 (SHTDIKVPDFSDYRRPEVLDSTKSS) the chain is Mitochondrial matrix. Residues 104-140 (KESSEARKGFSYLVTATTTVGVAYAAKNVVSQFVSSM) traverse the membrane as a helical segment. At 141–274 (SASADVLAMS…FTSDDMVIVG (134 aa)) the chain is on the mitochondrial intermembrane side. Residues 187 to 272 (EAAVEVSQLR…YEFTSDDMVI (86 aa)) enclose the Rieske domain. Cys217, His219, Cys236, His239, and Ser241 together coordinate [2Fe-2S] cluster. Cys222 and Cys238 are joined by a disulfide.

This sequence belongs to the Rieske iron-sulfur protein family. Component of the ubiquinol-cytochrome c oxidoreductase (cytochrome b-c1 complex, complex III, CIII), a multisubunit enzyme composed of 11 subunits. The complex is composed of 3 respiratory subunits cytochrome b, cytochrome c1 and Rieske protein UQCRFS1, 2 core protein subunits UQCRC1/QCR1 and UQCRC2/QCR2, and 6 low-molecular weight protein subunits UQCRH/QCR6, UQCRB/QCR7, UQCRQ/QCR8, UQCR10/QCR9, UQCR11/QCR10 and subunit 9, the cleavage product of Rieske protein UQCRFS1. The complex exists as an obligatory dimer and forms supercomplexes (SCs) in the inner mitochondrial membrane with NADH-ubiquinone oxidoreductase (complex I, CI) and cytochrome c oxidase (complex IV, CIV), resulting in different assemblies (supercomplex SCI(1)III(2)IV(1) and megacomplex MCI(2)III(2)IV(2)). Incorporation of the Rieske protein UQCRFS1 is the penultimate step in complex III assembly. Interacts with TTC19, which is involved in the clearance of UQCRFS1 fragments. In terms of assembly, component of the ubiquinol-cytochrome c oxidoreductase (cytochrome b-c1 complex, complex III, CIII). Subunit 9 corresponds to the mitochondrial targeting sequence (MTS) of Rieske protein UQCRFS1. It is retained after processing and incorporated inside complex III, where it remains bound to the complex and localizes between the 2 core subunits UQCRC1/QCR1 and UQCRC2/QCR2. Requires [2Fe-2S] cluster as cofactor. Proteolytic processing is necessary for the correct insertion of UQCRFS1 in the complex III dimer. Several fragments are generated during UQCRFS1 insertion, most probably due to the endogenous matrix-processing peptidase (MPP) activity of the 2 core protein subunits UQCRC1/QCR1 and UQCRC2/QCR2, which are homologous to the 2 mitochondrial-processing peptidase (MPP) subunits beta-MPP and alpha-MPP respectively. The action of the protease is also necessary for the clearance of the UQCRFS1 fragments.

It localises to the mitochondrion inner membrane. It carries out the reaction a quinol + 2 Fe(III)-[cytochrome c](out) = a quinone + 2 Fe(II)-[cytochrome c](out) + 2 H(+)(out). Component of the ubiquinol-cytochrome c oxidoreductase, a multisubunit transmembrane complex that is part of the mitochondrial electron transport chain which drives oxidative phosphorylation. The respiratory chain contains 3 multisubunit complexes succinate dehydrogenase (complex II, CII), ubiquinol-cytochrome c oxidoreductase (cytochrome b-c1 complex, complex III, CIII) and cytochrome c oxidase (complex IV, CIV), that cooperate to transfer electrons derived from NADH and succinate to molecular oxygen, creating an electrochemical gradient over the inner membrane that drives transmembrane transport and the ATP synthase. The cytochrome b-c1 complex catalyzes electron transfer from ubiquinol to cytochrome c, linking this redox reaction to translocation of protons across the mitochondrial inner membrane, with protons being carried across the membrane as hydrogens on the quinol. In the process called Q cycle, 2 protons are consumed from the matrix, 4 protons are released into the intermembrane space and 2 electrons are passed to cytochrome c. The Rieske protein is a catalytic core subunit containing a [2Fe-2S] iron-sulfur cluster. It cycles between 2 conformational states during catalysis to transfer electrons from the quinol bound in the Q(0) site in cytochrome b to cytochrome c1. Incorporation of UQCRFS1 is the penultimate step in complex III assembly. Functionally, component of the ubiquinol-cytochrome c oxidoreductase (cytochrome b-c1 complex, complex III, CIII). UQCRFS1 undergoes proteolytic processing once it is incorporated in the complex III dimer. One of the fragments, called subunit 9, corresponds to its mitochondrial targeting sequence (MTS). The proteolytic processing is necessary for the correct insertion of UQCRFS1 in the complex III dimer, but the persistence of UQCRFS1-derived fragments may prevent newly imported UQCRFS1 to be processed and assembled into complex III and is detrimental for the complex III structure and function. The polypeptide is Cytochrome b-c1 complex subunit Rieske, mitochondrial (UQCRFS1) (Bos taurus (Bovine)).